The sequence spans 186 residues: UPF0301 protein Nmul_A2478 (186 aa).

The protein belongs to the UPF0301 (AlgH) family.

In Nitrosospira multiformis (strain ATCC 25196 / NCIMB 11849 / C 71), this protein is UPF0301 protein Nmul_A2478.